The following is a 181-amino-acid chain: ATP synthase subunit delta (181 aa).

It belongs to the ATPase delta chain family. As to quaternary structure, F-type ATPases have 2 components, F(1) - the catalytic core - and F(0) - the membrane proton channel. F(1) has five subunits: alpha(3), beta(3), gamma(1), delta(1), epsilon(1). F(0) has three main subunits: a(1), b(2) and c(10-14). The alpha and beta chains form an alternating ring which encloses part of the gamma chain. F(1) is attached to F(0) by a central stalk formed by the gamma and epsilon chains, while a peripheral stalk is formed by the delta and b chains.

It localises to the cell inner membrane. F(1)F(0) ATP synthase produces ATP from ADP in the presence of a proton or sodium gradient. F-type ATPases consist of two structural domains, F(1) containing the extramembraneous catalytic core and F(0) containing the membrane proton channel, linked together by a central stalk and a peripheral stalk. During catalysis, ATP synthesis in the catalytic domain of F(1) is coupled via a rotary mechanism of the central stalk subunits to proton translocation. Functionally, this protein is part of the stalk that links CF(0) to CF(1). It either transmits conformational changes from CF(0) to CF(1) or is implicated in proton conduction. In Aquifex aeolicus (strain VF5), this protein is ATP synthase subunit delta.